Here is a 246-residue protein sequence, read N- to C-terminus: Phycocyanobilin:ferredoxin oxidoreductase (246 aa).

The protein belongs to the HY2 family.

The enzyme catalyses (2R,3Z)-phycocyanobilin + 4 oxidized [2Fe-2S]-[ferredoxin] = biliverdin IXalpha + 4 reduced [2Fe-2S]-[ferredoxin] + 4 H(+). Its function is as follows. Catalyzes the four-electron reduction of biliverdin IX-alpha (2-electron reduction at both the A and D rings); the reaction proceeds via an isolatable 2-electron intermediate, 181,182-dihydrobiliverdin. This Synechococcus sp. (strain CC9902) protein is Phycocyanobilin:ferredoxin oxidoreductase.